The chain runs to 262 residues: Ubiquinone biosynthesis protein COQ4, mitochondrial (262 aa).

Histidine 154, aspartate 155, histidine 158, and glutamate 170 together coordinate Zn(2+). The tract at residues 243–262 is disordered; sequence LGIEQPPDLRQMKKDMAKKK. Over residues 252–262 the composition is skewed to basic and acidic residues; it reads RQMKKDMAKKK.

Belongs to the COQ4 family. Component of a multi-subunit COQ enzyme complex, composed of at least COQ3, COQ4, COQ5, COQ6, COQ7 and COQ9. Requires Zn(2+) as cofactor.

Its subcellular location is the mitochondrion inner membrane. The enzyme catalyses a 4-hydroxy-3-methoxy-5-(all-trans-polyprenyl)benzoate + H(+) = a 2-methoxy-6-(all-trans-polyprenyl)phenol + CO2. Its pathway is cofactor biosynthesis; ubiquinone biosynthesis. Its function is as follows. Lyase that catalyzes the C1-decarboxylation of 4-hydroxy-3-methoxy-5-(all-trans-polyprenyl)benzoic acid into 2-methoxy-6-(all-trans-polyprenyl)phenol during ubiquinone biosynthesis. This is Ubiquinone biosynthesis protein COQ4, mitochondrial from Yarrowia lipolytica (strain CLIB 122 / E 150) (Yeast).